Here is a 187-residue protein sequence, read N- to C-terminus: Structural protein ORF187 (187 aa).

Residues 65-85 (IYQPTAIAVSGVGGIIGALLA) form a helical membrane-spanning segment.

Its subcellular location is the host membrane. The protein localises to the virion. The protein is Structural protein ORF187 of Acidianus two-tailed virus (ATV).